The sequence spans 186 residues: UPF0149 protein Pfl01_5435 (186 aa).

It belongs to the UPF0149 family.

This is UPF0149 protein Pfl01_5435 from Pseudomonas fluorescens (strain Pf0-1).